Here is a 324-residue protein sequence, read N- to C-terminus: NAD(P)H-dependent D-xylose reductase xyl1 (324 aa).

The active-site Proton donor is the Tyr-50. Substrate is bound at residue His-112. NAD(+) contacts are provided by residues Ser-168 to Asn-169, Ser-217 to Glu-226, and Lys-273 to Asn-283.

The protein belongs to the aldo/keto reductase family.

It catalyses the reaction an alditol + NAD(+) = an aldose + NADH + H(+). It carries out the reaction an alditol + NADP(+) = an aldose + NADPH + H(+). The catalysed reaction is xylitol + NAD(+) = D-xylose + NADH + H(+). The enzyme catalyses xylitol + NADP(+) = D-xylose + NADPH + H(+). It participates in carbohydrate metabolism; D-xylose degradation. It functions in the pathway carbohydrate degradation; L-arabinose degradation via L-arabinitol; D-xylulose 5-phosphate from L-arabinose (fungal route): step 1/5. Its function is as follows. Catalyzes the initial reaction in the xylose utilization pathway by reducing D-xylose into xylitol. Xylose is a major component of hemicelluloses such as xylan. Most fungi utilize D-xylose via three enzymatic reactions, xylose reductase (XR), xylitol dehydrogenase (XDH), and xylulokinase, to form xylulose 5-phosphate, which enters pentose phosphate pathway. Also major aldose reductase in pentose and D-galactose catabolism. Reduces the pentose L-arabinose and the hexose D-galactose to their respective polyols. Responsible for extracellular beta-galactosidase formation and cellulase induction during growth on lactose. The protein is NAD(P)H-dependent D-xylose reductase xyl1 (xyl1) of Hypocrea jecorina (Trichoderma reesei).